A 590-amino-acid chain; its full sequence is Arginine--tRNA ligase (590 aa).

Residues Ala-138–His-148 carry the 'HIGH' region motif.

This sequence belongs to the class-I aminoacyl-tRNA synthetase family. As to quaternary structure, monomer.

It is found in the cytoplasm. It carries out the reaction tRNA(Arg) + L-arginine + ATP = L-arginyl-tRNA(Arg) + AMP + diphosphate. This is Arginine--tRNA ligase from Orientia tsutsugamushi (strain Ikeda) (Rickettsia tsutsugamushi).